Consider the following 428-residue polypeptide: Glutamate-1-semialdehyde 2,1-aminomutase (428 aa).

Residue K267 is modified to N6-(pyridoxal phosphate)lysine.

It belongs to the class-III pyridoxal-phosphate-dependent aminotransferase family. HemL subfamily. Homodimer. It depends on pyridoxal 5'-phosphate as a cofactor.

The protein resides in the cytoplasm. It catalyses the reaction (S)-4-amino-5-oxopentanoate = 5-aminolevulinate. It participates in porphyrin-containing compound metabolism; protoporphyrin-IX biosynthesis; 5-aminolevulinate from L-glutamyl-tRNA(Glu): step 2/2. Its pathway is porphyrin-containing compound metabolism; chlorophyll biosynthesis. The chain is Glutamate-1-semialdehyde 2,1-aminomutase from Prochlorococcus marinus (strain MIT 9313).